We begin with the raw amino-acid sequence, 346 residues long: Phosphoribosylformylglycinamidine cyclo-ligase (346 aa).

This sequence belongs to the AIR synthase family.

Its subcellular location is the cytoplasm. It carries out the reaction 2-formamido-N(1)-(5-O-phospho-beta-D-ribosyl)acetamidine + ATP = 5-amino-1-(5-phospho-beta-D-ribosyl)imidazole + ADP + phosphate + H(+). Its pathway is purine metabolism; IMP biosynthesis via de novo pathway; 5-amino-1-(5-phospho-D-ribosyl)imidazole from N(2)-formyl-N(1)-(5-phospho-D-ribosyl)glycinamide: step 2/2. The protein is Phosphoribosylformylglycinamidine cyclo-ligase of Bacillus pumilus (strain SAFR-032).